We begin with the raw amino-acid sequence, 410 residues long: Peptidase T (410 aa).

His-79 contacts Zn(2+). Asp-81 is a catalytic residue. Asp-142 is a Zn(2+) binding site. Glu-176 (proton acceptor) is an active-site residue. Glu-177, Asp-199, and His-381 together coordinate Zn(2+).

Belongs to the peptidase M20B family. The cofactor is Zn(2+).

The protein resides in the cytoplasm. The catalysed reaction is Release of the N-terminal residue from a tripeptide.. Functionally, cleaves the N-terminal amino acid of tripeptides. This chain is Peptidase T, found in Listeria welshimeri serovar 6b (strain ATCC 35897 / DSM 20650 / CCUG 15529 / CIP 8149 / NCTC 11857 / SLCC 5334 / V8).